Here is a 158-residue protein sequence, read N- to C-terminus: Dihydroneopterin triphosphate diphosphatase (158 aa).

Residues lysine 14, arginine 36, and threonine 47 each contribute to the substrate site. The Nudix hydrolase domain maps to 14–153 (KNNQSVLVVI…NNAEAIKKYL (140 aa)). The short motif at 48–69 (GTIESDETPKKTAIRELWEEVR) is the Nudix box element. Residues glutamate 63 and glutamate 67 each contribute to the Mg(2+) site. Residue 88–91 (FEIF) participates in substrate binding. A Mg(2+)-binding site is contributed by glutamate 124. Residue serine 142 participates in substrate binding.

Belongs to the Nudix hydrolase family. Mg(2+) serves as cofactor.

It catalyses the reaction 7,8-dihydroneopterin 3'-triphosphate + H2O = 7,8-dihydroneopterin 3'-phosphate + diphosphate + H(+). Functionally, catalyzes the hydrolysis of dihydroneopterin triphosphate to dihydroneopterin monophosphate and pyrophosphate. Required for efficient folate biosynthesis. Can also hydrolyze nucleoside triphosphates with a preference for dATP. This is Dihydroneopterin triphosphate diphosphatase (nudB) from Haemophilus influenzae (strain ATCC 51907 / DSM 11121 / KW20 / Rd).